A 301-amino-acid chain; its full sequence is Sulfate adenylyltransferase subunit 2 (301 aa).

Residues 279–301 are disordered; sequence RQGRLIDRDEAGSMEKKKREGYF.

This sequence belongs to the PAPS reductase family. CysD subfamily. As to quaternary structure, heterodimer composed of CysD, the smaller subunit, and CysN.

The catalysed reaction is sulfate + ATP + H(+) = adenosine 5'-phosphosulfate + diphosphate. It participates in sulfur metabolism; hydrogen sulfide biosynthesis; sulfite from sulfate: step 1/3. Its function is as follows. With CysN forms the ATP sulfurylase (ATPS) that catalyzes the adenylation of sulfate producing adenosine 5'-phosphosulfate (APS) and diphosphate, the first enzymatic step in sulfur assimilation pathway. APS synthesis involves the formation of a high-energy phosphoric-sulfuric acid anhydride bond driven by GTP hydrolysis by CysN coupled to ATP hydrolysis by CysD. This Mesorhizobium japonicum (strain LMG 29417 / CECT 9101 / MAFF 303099) (Mesorhizobium loti (strain MAFF 303099)) protein is Sulfate adenylyltransferase subunit 2.